A 284-amino-acid chain; its full sequence is 2-dehydro-3-deoxyphosphooctonate aldolase (284 aa).

It belongs to the KdsA family.

The protein resides in the cytoplasm. It carries out the reaction D-arabinose 5-phosphate + phosphoenolpyruvate + H2O = 3-deoxy-alpha-D-manno-2-octulosonate-8-phosphate + phosphate. Its pathway is carbohydrate biosynthesis; 3-deoxy-D-manno-octulosonate biosynthesis; 3-deoxy-D-manno-octulosonate from D-ribulose 5-phosphate: step 2/3. It participates in bacterial outer membrane biogenesis; lipopolysaccharide biosynthesis. This is 2-dehydro-3-deoxyphosphooctonate aldolase from Paraburkholderia phymatum (strain DSM 17167 / CIP 108236 / LMG 21445 / STM815) (Burkholderia phymatum).